The primary structure comprises 355 residues: Probable aldo-keto reductase 3 (355 aa).

The active-site Proton donor is Y70. Substrate is bound at residue H138. 217–227 (SPLGRGFFSSG) is a binding site for NADP(+).

This sequence belongs to the aldo/keto reductase family.

The sequence is that of Probable aldo-keto reductase 3 from Oryza sativa subsp. indica (Rice).